Reading from the N-terminus, the 1059-residue chain is Kinesin-like protein KIN-7K, chloroplastic (1059 aa).

2 stretches are compositionally biased toward low complexity: residues 1 to 35 (MSSR…SAGS) and 43 to 58 (PRSY…SSHF). A chloroplast-targeting transit peptide spans 1 to 48 (MSSRPSSSASSRRSSSPFSAGSRRPPTSSSSSAGSYLTGRLMPRSYST). Residues 1–99 (MSSRPSSSAS…SPPSPVPFPS (99 aa)) are disordered. Residues 59-69 (FGGGGGSGGGS) are compositionally biased toward gly residues. Residues 70 to 87 (RSTTPGRRGSSSSSLVGP) are compositionally biased toward low complexity. The span at 88–97 (VPSPPSPVPF) shows a compositional bias: pro residues. The 318-residue stretch at 114 to 431 (SISVTIRFRP…LKFASRAKRV (318 aa)) folds into the Kinesin motor domain. An ATP-binding site is contributed by 194-201 (GVTSSGKT). A coiled-coil region spans residues 435–518 (AARNRMIDEK…IQRLTKLILV (84 aa)). The tract at residues 526–570 (ALTDTSSHQRHNSVNEEDKVSTSQDSSMLVQNDSATKDSLSSASP) is disordered. The span at 546–569 (STSQDSSMLVQNDSATKDSLSSAS) shows a compositional bias: polar residues. Coiled-coil stretches lie at residues 640 to 674 (EGTK…GEAS), 700 to 781 (ELEL…EENR), and 862 to 910 (LEDM…LEND). An RING-type zinc finger spans residues 1013 to 1048 (CKVCFESATAAVLLPCRHFCLCKPCSLACSECPLCR).

It belongs to the TRAFAC class myosin-kinesin ATPase superfamily. Kinesin family. KIN-7 subfamily.

Its subcellular location is the plastid. The protein localises to the chloroplast. The polypeptide is Kinesin-like protein KIN-7K, chloroplastic (Oryza sativa subsp. japonica (Rice)).